The following is a 1207-amino-acid chain: Protein STU1 (1207 aa).

Disordered regions lie at residues 504-525, 549-730, 789-856, 869-928, and 1086-1105; these read EKTA…SQSS, EQRR…DEDL, AQSI…EGVQ, AVEH…LYSE, and SSTP…LPGA. The span at 576–594 shows a compositional bias: low complexity; it reads SASTKSLSARTASTASTAS. Polar residues-rich tracts occupy residues 605–624, 653–672, and 684–710; these read SGES…SLMS, GKTT…TTKK, and AQTQ…VQKT. Composition is skewed to low complexity over residues 711-724 and 791-806; these read ASAS…APSA and SIHH…SHLS. Residues 869–878 show a composition bias toward basic and acidic residues; sequence AVEHEVEKPV. Polar residues-rich tracts occupy residues 895-905 and 919-928; these read NESISSDTVMG and TSTGSVLYSE.

Belongs to the CLASP family. Interacts with microtubules.

It localises to the cytoplasm. Its subcellular location is the cytoskeleton. The protein localises to the nucleus. The protein resides in the spindle. Functionally, microtubule binding protein that promotes the stabilization of dynamic microtubules. Required for mitotic spindle formation. In Phaeosphaeria nodorum (strain SN15 / ATCC MYA-4574 / FGSC 10173) (Glume blotch fungus), this protein is Protein STU1 (STU1).